The sequence spans 259 residues: Tryptophan synthase alpha chain (259 aa).

Active-site proton acceptor residues include Glu52 and Asp63.

Belongs to the TrpA family. Tetramer of two alpha and two beta chains.

The catalysed reaction is (1S,2R)-1-C-(indol-3-yl)glycerol 3-phosphate + L-serine = D-glyceraldehyde 3-phosphate + L-tryptophan + H2O. It participates in amino-acid biosynthesis; L-tryptophan biosynthesis; L-tryptophan from chorismate: step 5/5. The alpha subunit is responsible for the aldol cleavage of indoleglycerol phosphate to indole and glyceraldehyde 3-phosphate. The polypeptide is Tryptophan synthase alpha chain (Streptococcus sanguinis (strain SK36)).